The primary structure comprises 669 residues: UvrABC system protein B (669 aa).

The 389-residue stretch at 26–414 folds into the Helicase ATP-binding domain; the sequence is EGLEDGLAHQ…SGDVVEQVVR (389 aa). An ATP-binding site is contributed by 39–46; sequence GVTGSGKT. The short motif at 92–115 is the Beta-hairpin element; that stretch reads YYDYYQPEAYVPSSDTFIEKDASV. The region spanning 431–597 is the Helicase C-terminal domain; it reads QVDDLLSEIR…GLNKKINDIL (167 aa). The 36-residue stretch at 629 to 664 folds into the UVR domain; sequence ESKIRELEAKMYQHAQDLEFEQAASVRDQVQALREQ.

The protein belongs to the UvrB family. As to quaternary structure, forms a heterotetramer with UvrA during the search for lesions. Interacts with UvrC in an incision complex.

The protein localises to the cytoplasm. The UvrABC repair system catalyzes the recognition and processing of DNA lesions. A damage recognition complex composed of 2 UvrA and 2 UvrB subunits scans DNA for abnormalities. Upon binding of the UvrA(2)B(2) complex to a putative damaged site, the DNA wraps around one UvrB monomer. DNA wrap is dependent on ATP binding by UvrB and probably causes local melting of the DNA helix, facilitating insertion of UvrB beta-hairpin between the DNA strands. Then UvrB probes one DNA strand for the presence of a lesion. If a lesion is found the UvrA subunits dissociate and the UvrB-DNA preincision complex is formed. This complex is subsequently bound by UvrC and the second UvrB is released. If no lesion is found, the DNA wraps around the other UvrB subunit that will check the other stand for damage. This Photorhabdus laumondii subsp. laumondii (strain DSM 15139 / CIP 105565 / TT01) (Photorhabdus luminescens subsp. laumondii) protein is UvrABC system protein B.